Here is a 284-residue protein sequence, read N- to C-terminus: P2R1A-PPP2R2A-interacting phosphatase regulator 1 (284 aa).

Disordered regions lie at residues 1–32, 112–198, and 235–284; these read MAQE…SNSA, EESL…PIKR, and AHTL…LPID. Low complexity-rich tracts occupy residues 152–164 and 172–184; these read SPSL…SSGL and PTRR…SQSP. Over residues 258-269 the composition is skewed to polar residues; it reads STGSPVSLSDSR.

The protein belongs to the FAM122 family.

Its subcellular location is the nucleus. It localises to the cytoplasm. In terms of biological role, acts as an inhibitor of serine/threonine-protein phosphatase 2A (PP2A) activity. Potentiates ubiquitin-mediated proteasomal degradation of serine/threonine-protein phosphatase 2A catalytic subunit alpha (PPP2CA). Inhibits PP2A-mediated dephosphorylation of WEE1, promoting ubiquitin-mediated proteolysis of WEE1, thereby releasing G2/M checkpoint. In Gallus gallus (Chicken), this protein is P2R1A-PPP2R2A-interacting phosphatase regulator 1.